The following is a 284-amino-acid chain: NAD kinase (284 aa).

Aspartate 67 (proton acceptor) is an active-site residue. NAD(+) is bound by residues aspartate 67–glycine 68, asparagine 141–aspartate 142, arginine 152, lysine 169, aspartate 171, threonine 182–serine 187, and glutamine 241.

The protein belongs to the NAD kinase family. Requires a divalent metal cation as cofactor.

Its subcellular location is the cytoplasm. The catalysed reaction is NAD(+) + ATP = ADP + NADP(+) + H(+). Its function is as follows. Involved in the regulation of the intracellular balance of NAD and NADP, and is a key enzyme in the biosynthesis of NADP. Catalyzes specifically the phosphorylation on 2'-hydroxyl of the adenosine moiety of NAD to yield NADP. The protein is NAD kinase of Geotalea daltonii (strain DSM 22248 / JCM 15807 / FRC-32) (Geobacter daltonii).